A 164-amino-acid chain; its full sequence is Kunitz-type proteinase inhibitor BbCI (164 aa).

It belongs to the protease inhibitor I3 (leguminous Kunitz-type inhibitor) family.

The protein localises to the secreted. Inhibits T.cruzi cruzipain. The polypeptide is Kunitz-type proteinase inhibitor BbCI (Bauhinia bauhinioides (Perlebia bauhinoides)).